The sequence spans 397 residues: Phosphoglycerate kinase (397 aa).

Substrate contacts are provided by residues 19-21 (DFN), arginine 35, 58-61 (HLGR), arginine 117, and arginine 150. ATP is bound by residues lysine 201, glutamate 323, and 349-352 (GGDS).

Belongs to the phosphoglycerate kinase family. As to quaternary structure, monomer.

The protein resides in the cytoplasm. It catalyses the reaction (2R)-3-phosphoglycerate + ATP = (2R)-3-phospho-glyceroyl phosphate + ADP. The protein operates within carbohydrate degradation; glycolysis; pyruvate from D-glyceraldehyde 3-phosphate: step 2/5. This Syntrophobacter fumaroxidans (strain DSM 10017 / MPOB) protein is Phosphoglycerate kinase.